Reading from the N-terminus, the 317-residue chain is L-lactate dehydrogenase 2 (317 aa).

NAD(+) contacts are provided by residues valine 16, aspartate 37, lysine 42, tyrosine 68, and 82–83 (GA). Residues glutamine 85 and arginine 91 each coordinate substrate. Residues threonine 104, 121-123 (ASN), and threonine 146 each bind NAD(+). Substrate is bound at residue 123–126 (NPVD). Residue 151 to 154 (DTTR) coordinates substrate. Beta-D-fructose 1,6-bisphosphate contacts are provided by arginine 156 and histidine 171. The active-site Proton acceptor is the histidine 178. Tyrosine 223 is subject to Phosphotyrosine. Position 232 (threonine 232) interacts with substrate.

Belongs to the LDH/MDH superfamily. LDH family. In terms of assembly, homotetramer.

It is found in the cytoplasm. The catalysed reaction is (S)-lactate + NAD(+) = pyruvate + NADH + H(+). The protein operates within fermentation; pyruvate fermentation to lactate; (S)-lactate from pyruvate: step 1/1. With respect to regulation, allosterically activated by fructose 1,6-bisphosphate (FBP). Catalyzes the conversion of lactate to pyruvate. This chain is L-lactate dehydrogenase 2, found in Enterococcus faecalis (strain ATCC 700802 / V583).